The sequence spans 251 residues: NADH-quinone oxidoreductase subunit B (251 aa).

Residues C38, C39, C104, and C134 each contribute to the [4Fe-4S] cluster site. The segment at R208–A251 is disordered. Positions G242 to A251 are enriched in basic and acidic residues.

It belongs to the complex I 20 kDa subunit family. NDH-1 is composed of 14 different subunits. Subunits NuoB, C, D, E, F, and G constitute the peripheral sector of the complex. [4Fe-4S] cluster serves as cofactor.

It is found in the cell membrane. It carries out the reaction a quinone + NADH + 5 H(+)(in) = a quinol + NAD(+) + 4 H(+)(out). In terms of biological role, NDH-1 shuttles electrons from NADH, via FMN and iron-sulfur (Fe-S) centers, to quinones in the respiratory chain. The immediate electron acceptor for the enzyme in this species is believed to be a menaquinone. Couples the redox reaction to proton translocation (for every two electrons transferred, four hydrogen ions are translocated across the cytoplasmic membrane), and thus conserves the redox energy in a proton gradient. This Rubrobacter xylanophilus (strain DSM 9941 / JCM 11954 / NBRC 16129 / PRD-1) protein is NADH-quinone oxidoreductase subunit B.